A 766-amino-acid chain; its full sequence is MSTVNAKGAKPATDANGQSLNPEEPSEALREEYAQLSDRVREARAAYYVHDQPVISDAEYDQLYRSLEEFEALHPELKANDSPTQEVGGEVGAAFSPVKHLEKMYSLEDVFSTDELVAWLERAQKQVAELPGAPEVAWLSEVKIDGLAVNLLYRDGVLVRAATRGDGTTGEDITHNVATIKTIPQRLSGENLPEEVEVRGEVFISSKDFRTLNEAMVEEGRAPFANPRNAAAGSLRQKDPQVTARRPLSMFVHGIGYVRGVDLETQSEAYEILRGWGLPVSPYSRVLSTVAEVLEFIAEFGDKRHALLHEIDGIVVKVDDRRTQFRLGYTSRVPRWAVAYKYPPEEVNTTLVDILVNVGRTGRVTPFGLMDPVRVAGSTVEMATLHNQDMVRAKGVLIGDTVVLRKAGDVIPEIVGPVVALRDGSEREFVMPAECPSCGTPLRPAKEGDVDIRCPNAETCPSQLKERVNHAAGRGAFDIEALGEEAARALTQPVPLDAPDGTELSVPPLRNEAGLFDLTPEDLRDVMVWRDARRTVTDEETGEKVQRVTPELVPYFWTKPTKARPSVPSKTTEQMFAQLEQAKDTELWRVLVALSIRHVGPTAARSLATSLRSMDAIRQADPETLAGTDGVGPVIAQAVQEFFAEPWRRRVVEQWAAAGVRMEEEVDESTPRTLEGVTVVVTGSLEGYSRDSAKEAILKRGGKASGSVSKKTHFLVAGDNAGTKLDKAESLGVPVLDEAGFEQLLAQGPEAFGDRADAADQPAAGE.

A disordered region spans residues 1–30 (MSTVNAKGAKPATDANGQSLNPEEPSEALR). NAD(+) is bound by residues 57 to 61 (DAEYD), 106 to 107 (SL), and glutamate 141. Catalysis depends on lysine 143, which acts as the N6-AMP-lysine intermediate. NAD(+)-binding residues include arginine 164, glutamate 201, lysine 317, and lysine 341. Positions 435, 438, 454, and 460 each coordinate Zn(2+). Positions 669 to 758 (STPRTLEGVT…PEAFGDRADA (90 aa)) constitute a BRCT domain. The segment at 747 to 766 (QGPEAFGDRADAADQPAAGE) is disordered.

Belongs to the NAD-dependent DNA ligase family. LigA subfamily. Mg(2+) serves as cofactor. Requires Mn(2+) as cofactor.

The catalysed reaction is NAD(+) + (deoxyribonucleotide)n-3'-hydroxyl + 5'-phospho-(deoxyribonucleotide)m = (deoxyribonucleotide)n+m + AMP + beta-nicotinamide D-nucleotide.. DNA ligase that catalyzes the formation of phosphodiester linkages between 5'-phosphoryl and 3'-hydroxyl groups in double-stranded DNA using NAD as a coenzyme and as the energy source for the reaction. It is essential for DNA replication and repair of damaged DNA. The chain is DNA ligase from Kocuria rhizophila (strain ATCC 9341 / DSM 348 / NBRC 103217 / DC2201).